The sequence spans 459 residues: MRSALPTFDEIWQRKFRHRLLIQAQQFPADTVFLIGCSGGMDSMLLLHLMSELFPHKVRAIYIDHQLQSSSRAWGVFVQNFAQQSHIPFTIQPVIVDTGNLENQAREARYAAFESHLKSNEVLVLAHHQQDQTETVLLRLLSGSGVKGLGAMKEIEQKKNICCWRPMLSVSRQQIEHWVEHLKIPYIQDLTNFDTTYDRAWCRETVWPVLQKRFPKMQEAISRTSILMQDADEILHEVLQQDLNQCGDLNHLDLSRLQQLSLARQRQLLSFWMKGKAIYRPAFEMVERVQQEVICAKADAKAALHWNHHYYVRYQNILYRVEKNKYLQKDLVSNVVSTIELQMDASLQLASGVFQIQPMQMGLSPQLFEQPLQLLPRQGGEKIHLYGRVGHWPLKKAIQEAQILPWLRHTIQILALDNVMLGVFTPKGFWLAQSSYCEAGGWQPNLISDVNYLRVEQNS.

Residue 38–43 (SGGMDS) participates in ATP binding.

It belongs to the tRNA(Ile)-lysidine synthase family.

The protein localises to the cytoplasm. It catalyses the reaction cytidine(34) in tRNA(Ile2) + L-lysine + ATP = lysidine(34) in tRNA(Ile2) + AMP + diphosphate + H(+). In terms of biological role, ligates lysine onto the cytidine present at position 34 of the AUA codon-specific tRNA(Ile) that contains the anticodon CAU, in an ATP-dependent manner. Cytidine is converted to lysidine, thus changing the amino acid specificity of the tRNA from methionine to isoleucine. This Acinetobacter baylyi (strain ATCC 33305 / BD413 / ADP1) protein is tRNA(Ile)-lysidine synthase.